Consider the following 441-residue polypeptide: tRNA-2-methylthio-N(6)-dimethylallyladenosine synthase (441 aa).

Positions 5 to 120 (KLLYIETFGC…LPEMVRAAEQ (116 aa)) constitute an MTTase N-terminal domain. [4Fe-4S] cluster is bound by residues cysteine 14, cysteine 50, cysteine 83, cysteine 158, cysteine 162, and cysteine 165. The 231-residue stretch at 144 to 374 (EGGGVTRFVT…QGLQRDMTIE (231 aa)) folds into the Radical SAM core domain. Residues 377–439 (AGFVGTCQAV…PNSLLGELAV (63 aa)) form the TRAM domain.

The protein belongs to the methylthiotransferase family. MiaB subfamily. As to quaternary structure, monomer. The cofactor is [4Fe-4S] cluster.

It is found in the cytoplasm. It catalyses the reaction N(6)-dimethylallyladenosine(37) in tRNA + (sulfur carrier)-SH + AH2 + 2 S-adenosyl-L-methionine = 2-methylsulfanyl-N(6)-dimethylallyladenosine(37) in tRNA + (sulfur carrier)-H + 5'-deoxyadenosine + L-methionine + A + S-adenosyl-L-homocysteine + 2 H(+). Functionally, catalyzes the methylthiolation of N6-(dimethylallyl)adenosine (i(6)A), leading to the formation of 2-methylthio-N6-(dimethylallyl)adenosine (ms(2)i(6)A) at position 37 in tRNAs that read codons beginning with uridine. The polypeptide is tRNA-2-methylthio-N(6)-dimethylallyladenosine synthase (Geobacter metallireducens (strain ATCC 53774 / DSM 7210 / GS-15)).